We begin with the raw amino-acid sequence, 72 residues long: Translation initiation factor IF-1 2 (72 aa).

The S1-like domain occupies 1–72; the sequence is MAKEDTIQMQ…SRARIVFRAK (72 aa).

The protein belongs to the IF-1 family. Component of the 30S ribosomal translation pre-initiation complex which assembles on the 30S ribosome in the order IF-2 and IF-3, IF-1 and N-formylmethionyl-tRNA(fMet); mRNA recruitment can occur at any time during PIC assembly.

It is found in the cytoplasm. Functionally, one of the essential components for the initiation of protein synthesis. Stabilizes the binding of IF-2 and IF-3 on the 30S subunit to which N-formylmethionyl-tRNA(fMet) subsequently binds. Helps modulate mRNA selection, yielding the 30S pre-initiation complex (PIC). Upon addition of the 50S ribosomal subunit IF-1, IF-2 and IF-3 are released leaving the mature 70S translation initiation complex. This Chromobacterium violaceum (strain ATCC 12472 / DSM 30191 / JCM 1249 / CCUG 213 / NBRC 12614 / NCIMB 9131 / NCTC 9757 / MK) protein is Translation initiation factor IF-1 2.